The following is a 566-amino-acid chain: Cyclin G (566 aa).

Residues 285–368 enclose the Cyclin N-terminal domain; that stretch reads MWYELPSDVL…VIANKLGVQM (84 aa).

This sequence belongs to the cyclin family. Cyclin G subfamily. Interacts with corto. Interacts with the cyclin-dependent kinases Cdk2 and Cdk4. Interacts with Brca2 and Rad9. Interacts with polycomb protein Asx. Interacts with protein phosphatase 2A subunit wdb.

The protein localises to the chromosome. Its function is as follows. Cyclin with roles in multiple processes including transcription, meiotic recombination repair, cell cycle regulation, and promotion of normal growth and metabolism. Binds to the promoter region of the homeobox gene Abd-B and is involved in maintaining Abd-B expression in the pupal epithelium. Involved in the transcriptional repression of the homeotic genes Scr and Ubx. Plays a role in meiotic recombination repair of DNA double-strand breaks which ensures efficient translation of grk and promotes grk activity in the oocyte, leading to oocyte dorso-ventral axis formation following secretion of grk from the oocyte and its binding to Egfr in the directly overlying follicle cells. Negatively regulates the binding of serine/threonine-protein kinase Akt1 to the protein phosphatase 2A subunit wdb, promoting normal growth and metabolism. Required for the formation of bilateral symmetry. Negatively regulates cell cycle progression by preventing G1 to S transition and retarding S-phase progression. This chain is Cyclin G, found in Drosophila melanogaster (Fruit fly).